The chain runs to 152 residues: Natriuretic peptides A (152 aa).

The signal sequence occupies residues 1 to 24 (MGSFSITKGFFLFLAFWLPGHIGA). 2 propeptides span residues 25–122 (NPVY…AGPR) and 92–102 (DGGALGRGPWD). Positions 54–104 (DEVMPPQALSEQTDEAGAALSSLSEVPPWTGEVNPSQRDGGALGRGPWDPS) are disordered. Residue Ser-128 is modified to Phosphoserine. A disulfide bond links Cys-129 and Cys-145. The segment at 146–150 (NSFRY) is important for degradation of atrial natriuretic peptide by IDE.

Belongs to the natriuretic peptide family. As to quaternary structure, homodimer; disulfide-linked antiparallel dimer. The precursor molecule is proteolytically cleaved by CORIN at Arg-122 to produce the atrial natriuretic peptide. Undergoes further proteolytic cleavage by unknown proteases to give rise to long-acting natriuretic peptide, vessel dilator and kaliuretic peptide. Additional processing gives rise to the auriculin and atriopeptin peptides. In the kidneys, alternative processing by an unknown protease results in the peptide urodilatin. Post-translationally, cleavage by MME initiates degradation of the factor and thereby regulates its activity. Degradation by IDE results in reduced activation of NPR1 (in vitro). During IDE degradation, the resulting products can temporarily stimulate NPR2 to produce cGMP, before the fragments are completely degraded and inactivated by IDE (in vitro). In terms of processing, degraded by IDE. Phosphorylation on Ser-128 decreases vasorelaxant activity. In terms of tissue distribution, high levels of expression in the atria compared to the ventricles. Very low levels of expression detected in extracardiac tissues such as the brain, hypothalamus, pituitary, lung and aorta. As to expression, atria (at protein level). High levels of expression in the atria with very low levels of expression in the ventricles (at protein level). Relatively low levels of expression detected in the brain compared to the atria (at protein level).

It is found in the secreted. Its subcellular location is the perikaryon. The protein localises to the cell projection. Functionally, hormone that plays a key role in mediating cardio-renal homeostasis, and is involved in vascular remodeling and regulating energy metabolism. Acts by specifically binding and stimulating NPR1 to produce cGMP, which in turn activates effector proteins, such as PRKG1, that drive various biological responses. Regulates vasodilation, natriuresis, diuresis and aldosterone synthesis and is therefore essential for regulating blood pressure, controlling the extracellular fluid volume and maintaining the fluid-electrolyte balance. Also involved in inhibiting cardiac remodeling and cardiac hypertrophy by inducing cardiomyocyte apoptosis and attenuating the growth of cardiomyocytes and fibroblasts. Plays a role in female pregnancy by promoting trophoblast invasion and spiral artery remodeling in uterus, and thus prevents pregnancy-induced hypertension. In adipose tissue, acts in various cGMP- and PKG-dependent pathways to regulate lipid metabolism and energy homeostasis. This includes up-regulating lipid metabolism and mitochondrial oxygen utilization by activating the AMP-activated protein kinase (AMPK), and increasing energy expenditure by acting via MAPK11 to promote the UCP1-dependent thermogenesis of brown adipose tissue. Binds the clearance receptor NPR3 which removes the hormone from circulation. May have a role in cardio-renal homeostasis through regulation of natriuresis, diuresis, vasodilation, and inhibiting aldosterone synthesis. In vitro, promotes the production of cGMP and induces vasodilation. May promote natriuresis, at least in part, by enhancing prostaglandin E2 synthesis resulting in the inhibition of renal Na+-K+-ATPase. However reports on the involvement of this peptide in mammal blood volume and blood pressure homeostasis are conflicting; according to a report, in vivo it is not sufficient to activate cGMP and does not inhibit collecting duct transport nor effect diuresis and natriuresis. Appears to bind to specific receptors that are distinct from the receptors bound by atrial natriuretic peptide and vessel dilator. Possibly enhances protein excretion in urine by decreasing proximal tubular protein reabsorption. Its function is as follows. May have a role in cardio-renal homeostasis through regulation of natriuresis, diuresis, and vasodilation. In vitro, promotes the production of cGMP and induces vasodilation. May promote natriuresis, at least in part, by enhancing prostaglandin E2 synthesis resulting in the inhibition of renal Na+-K+-ATPase. However reports on the involvement of this peptide in mammal blood volume and blood pressure homeostasis are conflicting; according to a report, in vivo it is not sufficient to activate cGMP and does not inhibit collecting duct transport nor effect diuresis and natriuresis. Appears to bind to specific receptors that are distinct from the receptors bound by the atrial natriuretic and long-acting natriuretic peptides. Possibly functions in protein excretion in urine by maintaining the integrity of the proximal tubules and enhancing protein excretion by decreasing proximal tubular protein reabsorption. In terms of biological role, may have a role in cardio-renal homeostasis through regulation of diuresis and inhibiting aldosterone synthesis. In vitro, promotes the production of cGMP and induces vasodilation. May promote natriuresis, at least in part, by enhancing prostaglandin E2 synthesis resulting in the inhibition of renal Na+-K+-ATPase. May have a role in potassium excretion but not sodium excretion (natriuresis). Possibly enhances protein excretion in urine by decreasing proximal tubular protein reabsorption. Functionally, hormone produced in the kidneys that appears to be important for maintaining cardio-renal homeostasis. Mediates vasodilation, natriuresis and diuresis primarily in the renal system, in order to maintain the extracellular fluid volume and control the fluid-electrolyte balance. Specifically binds and stimulates cGMP production by renal transmembrane receptors, likely NPR1. Urodilatin not ANP, may be the natriuretic peptide responsible for the regulation of sodium and water homeostasis in the kidney. May have a role in cardio-renal homeostasis through regulation of natriuresis and vasodilation. In vivo promotes natriuresis and in vitro, vasodilates renal artery strips. Its function is as follows. May have a role in cardio-renal homeostasis through regulation of regulation of natriuresis and vasodilation. In vivo promotes natriuresis. In vitro, vasodilates intestinal smooth muscle but not smooth muscle strips. In terms of biological role, may have a role in cardio-renal homeostasis through regulation of natriuresis and vasodilation. In vivo promotes natriuresis. In vitro, selectively vasodilates intestinal and vascular smooth muscle strips. Functionally, may have a role in cardio-renal homeostasis through regulation of natriuresis and vasodilation. In vivo promotes natriuresis. In vitro, selectively vasodilates intestinal smooth muscle but not vascular smooth muscle strips. This is Natriuretic peptides A (Nppa) from Rattus norvegicus (Rat).